Reading from the N-terminus, the 334-residue chain is Trans-3-hydroxy-L-proline dehydratase (334 aa).

C91 serves as the catalytic Proton acceptor. Substrate-binding positions include 92–93 (GH), D250, and 255–256 (GT).

It belongs to the proline racemase family.

The enzyme catalyses trans-3-hydroxy-L-proline = 1-pyrroline-2-carboxylate + H2O. Its function is as follows. Catalyzes the dehydration of trans-3-hydroxy-L-proline (t3LHyp) to Delta(1)-pyrroline-2-carboxylate (Pyr2C). Is likely involved in a degradation pathway that converts t3LHyp to L-proline. Can also catalyze the epimerization of trans-4-hydroxy-L-proline (t4LHyp) to cis-4-hydroxy-D-proline (c4DHyp) in vitro. Displays no proline racemase activity. This chain is Trans-3-hydroxy-L-proline dehydratase, found in Bacillus thuringiensis subsp. konkukian (strain 97-27).